We begin with the raw amino-acid sequence, 206 residues long: Large ribosomal subunit protein mL40 (206 aa).

The N-terminal 46 residues, 1 to 46 (MATGVMLCAARALRPRSWIPGTCQAHVRHTHQRASLLAFWDLIPMR), are a transit peptide targeting the mitochondrion. Residues 170 to 189 (PFEKEGPHYTPPISNYQAPE) are disordered.

The protein belongs to the mitochondrion-specific ribosomal protein mL40 family. In terms of assembly, component of the mitochondrial ribosome large subunit (39S) which comprises a 16S rRNA and about 50 distinct proteins. In terms of tissue distribution, ubiquitous.

Its subcellular location is the mitochondrion. The sequence is that of Large ribosomal subunit protein mL40 (Mrpl40) from Mus musculus (Mouse).